Consider the following 152-residue polypeptide: 6,7-dimethyl-8-ribityllumazine synthase (152 aa).

5-amino-6-(D-ribitylamino)uracil-binding positions include Phe21, 55-57, and 79-81; these read AFE and AVI. (2S)-2-hydroxy-3-oxobutyl phosphate is bound at residue 84-85; the sequence is AT. The active-site Proton donor is His87. A 5-amino-6-(D-ribitylamino)uracil-binding site is contributed by Phe112. Residue Arg126 participates in (2S)-2-hydroxy-3-oxobutyl phosphate binding.

This sequence belongs to the DMRL synthase family. As to quaternary structure, forms an icosahedral capsid composed of 60 subunits, arranged as a dodecamer of pentamers.

It catalyses the reaction (2S)-2-hydroxy-3-oxobutyl phosphate + 5-amino-6-(D-ribitylamino)uracil = 6,7-dimethyl-8-(1-D-ribityl)lumazine + phosphate + 2 H2O + H(+). It functions in the pathway cofactor biosynthesis; riboflavin biosynthesis; riboflavin from 2-hydroxy-3-oxobutyl phosphate and 5-amino-6-(D-ribitylamino)uracil: step 1/2. In terms of biological role, catalyzes the formation of 6,7-dimethyl-8-ribityllumazine by condensation of 5-amino-6-(D-ribitylamino)uracil with 3,4-dihydroxy-2-butanone 4-phosphate. This is the penultimate step in the biosynthesis of riboflavin. The chain is 6,7-dimethyl-8-ribityllumazine synthase from Exiguobacterium sibiricum (strain DSM 17290 / CCUG 55495 / CIP 109462 / JCM 13490 / 255-15).